The chain runs to 74 residues: Conotoxin AbVIA (74 aa).

Positions V1–A17 are cleaved as a signal peptide. The propeptide occupies V18–K38. Intrachain disulfides connect C43–C57, C50–C61, and C56–C68. S73 carries the serine amide modification.

It belongs to the conotoxin O1 superfamily. In terms of tissue distribution, expressed by the venom duct.

It localises to the secreted. The sequence is that of Conotoxin AbVIA from Conus abbreviatus (Abbreviated cone).